The primary structure comprises 90 residues: MRAVTLKATGRVQGVGFRWATKVAADKCGVNGIVRNLMDGSVFIEAEGEDQRVQVFIDVVRQSPTDFGKVKHLEVHEVEPQNYHDFRITN.

In terms of domain architecture, Acylphosphatase-like spans 3–90 (AVTLKATGRV…QNYHDFRITN (88 aa)). Active-site residues include R18 and N36.

Belongs to the acylphosphatase family.

The catalysed reaction is an acyl phosphate + H2O = a carboxylate + phosphate + H(+). The polypeptide is Acylphosphatase (acyP) (Lactiplantibacillus plantarum (strain ATCC BAA-793 / NCIMB 8826 / WCFS1) (Lactobacillus plantarum)).